The sequence spans 544 residues: CTP synthase (544 aa).

An amidoligase domain region spans residues 1–265 (MTKFIFVTGG…DDIICEHLDL (265 aa)). Ser13 contacts CTP. Ser13 provides a ligand contact to UTP. Residues 14–19 (SLGKGI) and Asp71 contribute to the ATP site. Mg(2+) is bound by residues Asp71 and Glu139. Residues 146–148 (DIE), 186–191 (KTKPTQ), and Lys222 contribute to the CTP site. UTP contacts are provided by residues 186–191 (KTKPTQ) and Lys222. Positions 290–542 (NIAMVGKYVD…VEAALAYQAD (253 aa)) constitute a Glutamine amidotransferase type-1 domain. L-glutamine is bound at residue Gly351. The Nucleophile; for glutamine hydrolysis role is filled by Cys378. L-glutamine-binding positions include 379–382 (LGMQ), Glu402, and Arg469. Residues His515 and Glu517 contribute to the active site.

Belongs to the CTP synthase family. In terms of assembly, homotetramer.

It catalyses the reaction UTP + L-glutamine + ATP + H2O = CTP + L-glutamate + ADP + phosphate + 2 H(+). It carries out the reaction L-glutamine + H2O = L-glutamate + NH4(+). The catalysed reaction is UTP + NH4(+) + ATP = CTP + ADP + phosphate + 2 H(+). The protein operates within pyrimidine metabolism; CTP biosynthesis via de novo pathway; CTP from UDP: step 2/2. With respect to regulation, allosterically activated by GTP, when glutamine is the substrate; GTP has no effect on the reaction when ammonia is the substrate. The allosteric effector GTP functions by stabilizing the protein conformation that binds the tetrahedral intermediate(s) formed during glutamine hydrolysis. Inhibited by the product CTP, via allosteric rather than competitive inhibition. Functionally, catalyzes the ATP-dependent amination of UTP to CTP with either L-glutamine or ammonia as the source of nitrogen. Regulates intracellular CTP levels through interactions with the four ribonucleotide triphosphates. This chain is CTP synthase, found in Laribacter hongkongensis (strain HLHK9).